A 489-amino-acid polypeptide reads, in one-letter code: Glucose-6-phosphate 1-dehydrogenase (489 aa).

NADP(+)-binding residues include Arg50 and Lys151. Substrate contacts are provided by His181, Lys185, Glu219, and Asp238. His243 serves as the catalytic Proton acceptor. Residues Lys341 and Lys346 each coordinate substrate.

The protein belongs to the glucose-6-phosphate dehydrogenase family. In terms of assembly, homodimer.

It carries out the reaction D-glucose 6-phosphate + NADP(+) = 6-phospho-D-glucono-1,5-lactone + NADPH + H(+). It functions in the pathway carbohydrate degradation; pentose phosphate pathway; D-ribulose 5-phosphate from D-glucose 6-phosphate (oxidative stage): step 1/3. Its function is as follows. Catalyzes the oxidation of glucose 6-phosphate to 6-phosphogluconolactone. In Gluconobacter oxydans (strain 621H) (Gluconobacter suboxydans), this protein is Glucose-6-phosphate 1-dehydrogenase.